A 534-amino-acid polypeptide reads, in one-letter code: Dual specificity calcium/calmodulin-dependent 3',5'-cyclic nucleotide phosphodiesterase 1B (534 aa).

The segment at methionine 1 to glutamate 21 is disordered. 2 positions are modified to phosphoserine: serine 7 and serine 14. Calmodulin-binding regions lie at residues serine 27 to asparagine 47 and glutamate 116 to arginine 139. In terms of domain architecture, PDEase spans valine 144 to glycine 501. Histidine 221 functions as the Proton donor in the catalytic mechanism. Residues histidine 225, histidine 261, aspartate 262, and aspartate 368 each coordinate Zn(2+). Aspartate 262 is a Mg(2+) binding site. Disordered regions lie at residues valine 442 to asparagine 473 and tryptophan 494 to aspartate 534. The span at lysine 453 to glutamine 462 shows a compositional bias: polar residues. Serine 464 and serine 512 each carry phosphoserine.

Belongs to the cyclic nucleotide phosphodiesterase family. PDE1 subfamily. Homodimer. It depends on Zn(2+) as a cofactor. Mg(2+) serves as cofactor. In terms of tissue distribution, expressed in central nervous system regions. Most abundant in basal ganglia. Also found in kidney papilla and adrenal medulla.

It localises to the cytoplasm. Its subcellular location is the cytosol. It catalyses the reaction a nucleoside 3',5'-cyclic phosphate + H2O = a nucleoside 5'-phosphate + H(+). The catalysed reaction is 3',5'-cyclic GMP + H2O = GMP + H(+). The enzyme catalyses 3',5'-cyclic AMP + H2O = AMP + H(+). With respect to regulation, type I PDE are activated by the binding of calmodulin in the presence of Ca(2+). Functionally, cyclic nucleotide phosphodiesterase with a dual specificity for the second messengers cAMP and cGMP, which are key regulators of many important physiological processes. Has a preference for cGMP as a substrate. In Bos taurus (Bovine), this protein is Dual specificity calcium/calmodulin-dependent 3',5'-cyclic nucleotide phosphodiesterase 1B.